We begin with the raw amino-acid sequence, 171 residues long: MSAPPPLQIREANAHLAAVHRRAAELERRLLAAERTMRAQAERLACQDQQLRAALDELGRAKDREIFTLQEQLLSSEATVRSLQAAVEQRDQMIQELQPRADLLQDITRQRPPLAALLATLEEAEELGPLPSSHSHGAQLLPDGPGPPLGNSMREEEGQDDQQPAVFGTTV.

Residues 7 to 98 are a coiled coil; the sequence is LQIREANAHL…QRDQMIQELQ (92 aa). The tract at residues 126 to 171 is disordered; the sequence is ELGPLPSSHSHGAQLLPDGPGPPLGNSMREEEGQDDQQPAVFGTTV.

As to expression, expressed in brain, heart, kidney, liver, lung, skeletal muscle, spleen and testis. Within the kidney expression is pronounced within glomeruli.

It localises to the cytoplasm. The sequence is that of Vimentin-type intermediate filament-associated coiled-coil protein (Vmac) from Rattus norvegicus (Rat).